The primary structure comprises 197 residues: ATP-dependent Clp protease proteolytic subunit (197 aa).

The active-site Nucleophile is the Ser100. Residue His125 is part of the active site.

Belongs to the peptidase S14 family. In terms of assembly, component of the chloroplastic Clp protease core complex.

The protein resides in the plastid. Its subcellular location is the chloroplast stroma. The enzyme catalyses Hydrolysis of proteins to small peptides in the presence of ATP and magnesium. alpha-casein is the usual test substrate. In the absence of ATP, only oligopeptides shorter than five residues are hydrolyzed (such as succinyl-Leu-Tyr-|-NHMec, and Leu-Tyr-Leu-|-Tyr-Trp, in which cleavage of the -Tyr-|-Leu- and -Tyr-|-Trp bonds also occurs).. Its function is as follows. Cleaves peptides in various proteins in a process that requires ATP hydrolysis. Has a chymotrypsin-like activity. Plays a major role in the degradation of misfolded proteins. The chain is ATP-dependent Clp protease proteolytic subunit from Angiopteris evecta (Mule's foot fern).